Here is a 258-residue protein sequence, read N- to C-terminus: Thiazole synthase (258 aa).

Catalysis depends on Lys-100, which acts as the Schiff-base intermediate with DXP. Residues Gly-161, 187–188 (AG), and 209–210 (NT) contribute to the 1-deoxy-D-xylulose 5-phosphate site.

Belongs to the ThiG family. Homotetramer. Forms heterodimers with either ThiH or ThiS.

Its subcellular location is the cytoplasm. The catalysed reaction is [ThiS sulfur-carrier protein]-C-terminal-Gly-aminoethanethioate + 2-iminoacetate + 1-deoxy-D-xylulose 5-phosphate = [ThiS sulfur-carrier protein]-C-terminal Gly-Gly + 2-[(2R,5Z)-2-carboxy-4-methylthiazol-5(2H)-ylidene]ethyl phosphate + 2 H2O + H(+). The protein operates within cofactor biosynthesis; thiamine diphosphate biosynthesis. Functionally, catalyzes the rearrangement of 1-deoxy-D-xylulose 5-phosphate (DXP) to produce the thiazole phosphate moiety of thiamine. Sulfur is provided by the thiocarboxylate moiety of the carrier protein ThiS. In vitro, sulfur can be provided by H(2)S. The protein is Thiazole synthase of Campylobacter jejuni subsp. jejuni serotype O:2 (strain ATCC 700819 / NCTC 11168).